Consider the following 302-residue polypeptide: Oxygen-dependent coproporphyrinogen-III oxidase (302 aa).

Serine 94 is a substrate binding site. A divalent metal cation contacts are provided by histidine 98 and histidine 108. The Proton donor role is filled by histidine 108. Residue asparagine 110 to arginine 112 participates in substrate binding. The a divalent metal cation site is built by histidine 147 and histidine 177. Positions tyrosine 242–glutamate 277 are important for dimerization. Glycine 260–arginine 262 provides a ligand contact to substrate.

The protein belongs to the aerobic coproporphyrinogen-III oxidase family. Homodimer. A divalent metal cation is required as a cofactor.

Its subcellular location is the cytoplasm. The enzyme catalyses coproporphyrinogen III + O2 + 2 H(+) = protoporphyrinogen IX + 2 CO2 + 2 H2O. Its pathway is porphyrin-containing compound metabolism; protoporphyrin-IX biosynthesis; protoporphyrinogen-IX from coproporphyrinogen-III (O2 route): step 1/1. In terms of biological role, involved in the heme biosynthesis. Catalyzes the aerobic oxidative decarboxylation of propionate groups of rings A and B of coproporphyrinogen-III to yield the vinyl groups in protoporphyrinogen-IX. In Aeromonas salmonicida (strain A449), this protein is Oxygen-dependent coproporphyrinogen-III oxidase.